We begin with the raw amino-acid sequence, 197 residues long: MSDTPVIGVLALQGDVREHLIALASADALARPVRRPEELAEVDGLVIPGGESTTMSKLAVLFGMMEPLRERVRAGMPVYGTCAGMILLAEKILDPRSGQETVGGIDMIVRRNAFGRQNESFEAAVEVGGVEGGPVDGVFIRAPWVESVGARTEVIAEHGGHIVAVRQENALATSFHPELTGDHRVHALFVDMVRAVN.

An L-glutamine-binding site is contributed by 50 to 52 (GES). Cysteine 82 serves as the catalytic Nucleophile. L-glutamine-binding positions include arginine 111 and 140–141 (IR). Residues histidine 176 and glutamate 178 each act as charge relay system in the active site.

This sequence belongs to the glutaminase PdxT/SNO family. As to quaternary structure, in the presence of PdxS, forms a dodecamer of heterodimers. Only shows activity in the heterodimer.

The catalysed reaction is aldehydo-D-ribose 5-phosphate + D-glyceraldehyde 3-phosphate + L-glutamine = pyridoxal 5'-phosphate + L-glutamate + phosphate + 3 H2O + H(+). It carries out the reaction L-glutamine + H2O = L-glutamate + NH4(+). Its pathway is cofactor biosynthesis; pyridoxal 5'-phosphate biosynthesis. Catalyzes the hydrolysis of glutamine to glutamate and ammonia as part of the biosynthesis of pyridoxal 5'-phosphate. The resulting ammonia molecule is channeled to the active site of PdxS. The protein is Pyridoxal 5'-phosphate synthase subunit PdxT of Streptomyces griseus subsp. griseus (strain JCM 4626 / CBS 651.72 / NBRC 13350 / KCC S-0626 / ISP 5235).